The following is an 86-amino-acid chain: Exodeoxyribonuclease 7 small subunit (86 aa).

The protein belongs to the XseB family. In terms of assembly, heterooligomer composed of large and small subunits.

It is found in the cytoplasm. It catalyses the reaction Exonucleolytic cleavage in either 5'- to 3'- or 3'- to 5'-direction to yield nucleoside 5'-phosphates.. Bidirectionally degrades single-stranded DNA into large acid-insoluble oligonucleotides, which are then degraded further into small acid-soluble oligonucleotides. This Xanthomonas euvesicatoria pv. vesicatoria (strain 85-10) (Xanthomonas campestris pv. vesicatoria) protein is Exodeoxyribonuclease 7 small subunit.